A 387-amino-acid chain; its full sequence is Diphthine methyltransferase (387 aa).

5 WD repeats span residues 62–102, 119–159, 195–237, 241–286, and 357–387; these read NTYG…KDDF, EKDV…VQFT, PHEL…FIWS, IHDA…ESIF, and GHDS…TWIV.

Belongs to the DPH7 family. Interacts with CAN1 and RTT10.

It is found in the cytoplasm. Its subcellular location is the endosome. The enzyme catalyses diphthine methyl ester-[translation elongation factor 2] + H2O = diphthine-[translation elongation factor 2] + methanol + H(+). It functions in the pathway protein modification; peptidyl-diphthamide biosynthesis. In terms of biological role, catalyzes the demethylation of diphthine methyl ester to form diphthine, an intermediate in diphthamide biosynthesis, a post-translational modification of histidine which occurs in translation elongation factor 2 (EFT1 and EFT2). Also plays a role in the regulation of the retromer complex and is required for the recycling from endosomes of plasma membrane proteins like CAN1 and MUP1. Identified in a screen for mutants with decreased levels of rDNA transcription. This chain is Diphthine methyltransferase (RRT2), found in Saccharomyces cerevisiae (strain ATCC 204508 / S288c) (Baker's yeast).